The chain runs to 542 residues: Phosphoacetylglucosamine mutase 2 (542 aa).

Serine 77 (phosphoserine intermediate) is an active-site residue. A Mg(2+)-binding site is contributed by serine 77. Phosphoserine is present on residues serine 77 and serine 82. Mg(2+) is bound by residues aspartate 292, aspartate 294, and aspartate 296. Residues 385–387 (EAN), 510–514 (RSSGT), and arginine 519 each bind substrate.

This sequence belongs to the phosphohexose mutase family. Mg(2+) is required as a cofactor.

The protein localises to the cytoplasm. The protein resides in the nucleus. The enzyme catalyses N-acetyl-alpha-D-glucosamine 1-phosphate = N-acetyl-D-glucosamine 6-phosphate. Its pathway is nucleotide-sugar biosynthesis; UDP-N-acetyl-alpha-D-glucosamine biosynthesis; N-acetyl-alpha-D-glucosamine 1-phosphate from alpha-D-glucosamine 6-phosphate (route I): step 2/2. Functionally, catalyzes the conversion of GlcNAc-6-P into GlcNAc-1-P during the synthesis of uridine diphosphate/UDP-GlcNAc, which is a biosynthetic precursor of chitin and also supplies the amino sugars for N-linked oligosaccharides of glycoproteins. This is Phosphoacetylglucosamine mutase 2 from Schizosaccharomyces pombe (strain 972 / ATCC 24843) (Fission yeast).